Consider the following 1485-residue polypeptide: Actin cytoskeleton-regulatory complex protein pan1 (1485 aa).

A disordered region spans residues 1 to 161; it reads MYSSSNSFMG…PPPPKSAGSK (161 aa). Residues 21-49 show a composition bias toward low complexity; that stretch reads PFMQQPSYSQYPPGQPQSQQQTGFPSQPT. Over residues 59–78 the composition is skewed to polar residues; that stretch reads VGSQLQPQQTGFPGQLQPQF. A compositionally biased stretch (low complexity) spans 81 to 107; sequence FPGAAPQQQQQQQQLGGFQQSVQQPQF. Polar residues-rich tracts occupy residues 111–127 and 134–144; these read PPQN…TTGL and RTSSEVASSFN. The EH 1 domain maps to 174–262; it reads DQAKFEQLFK…EKIKNEVSSM (89 aa). Residues 206-241 enclose the EF-hand 1 domain; it reads LPGSELSKIWILSDTTKSGQLFFPEFALAMYLCNLR. Disordered stretches follow at residues 268 to 309 and 323 to 342; these read FGVP…QPTN and FLPQ…GPSA. Positions 296-305 are enriched in pro residues; it reads PPAPQQPQPQ. Residues 323–338 show a composition bias toward polar residues; it reads FLPQQTGFQPNQSSFL. Residues 465-554 form the EH 2 domain; it reads EKKIYDDLFR…PELIPPSTRN (90 aa). The 36-residue stretch at 498–533 folds into the EF-hand 2 domain; it reads LNRQDLERIWTLADPHNRGRLNMDEFAVAMHLIYRK. Disordered regions lie at residues 620 to 649, 799 to 871, and 895 to 1485; these read AGYR…EEEL, AAEL…HERR, and RTAH…RVLG. The stretch at 645–765 forms a coiled coil; it reads SEEELSVEQL…LFRLKDAKAH (121 aa). 2 stretches are compositionally biased toward basic and acidic residues: residues 816–871 and 899–920; these read AAAR…HERR and VRKE…HEDP. The segment covering 921–941 has biased composition (low complexity); the sequence is SIASRPSPAPSAGSVGSAPGA. Basic and acidic residues-rich tracts occupy residues 942–960, 980–1016, 1062–1137, and 1144–1156; these read THED…RIAE, RQER…EQRG, AARE…EQEA, and AELE…ERQL. The stretch at 1054 to 1172 forms a coiled coil; sequence EETAATEQAA…LEDESSSDEE (119 aa). The segment covering 1161–1173 has biased composition (acidic residues); that stretch reads EGLEDESSSDEEG. The span at 1177–1188 shows a compositional bias: polar residues; it reads ITPQDSTPTQSQ. Low complexity-rich tracts occupy residues 1189-1201 and 1210-1226; these read VLPA…AAPE and PEIT…SSFS. Composition is skewed to polar residues over residues 1238–1248 and 1255–1270; these read ITSQAAENQVS and QTTI…STNP. A compositionally biased stretch (basic and acidic residues) spans 1290–1299; the sequence is LERKSRVRPE. Over residues 1353–1363 the composition is skewed to polar residues; the sequence is SKSSTPVQDNT. A compositionally biased stretch (low complexity) spans 1364–1379; that stretch reads VASPVVPEASASLSAP. 2 stretches are compositionally biased toward pro residues: residues 1380-1394 and 1406-1441; these read AAPP…PPAS and TAPP…PPGA. A compositionally biased stretch (low complexity) spans 1442–1451; sequence AAPAAPAGAA. In terms of domain architecture, WH2 spans 1452–1469; sequence DRSALLASIQMGKGLRKV. Over residues 1472–1485 the composition is skewed to polar residues; that stretch reads NDRSSSSSAGRVLG.

The protein belongs to the PAN1 family. In terms of assembly, component of the PAN1 actin cytoskeleton-regulatory complex.

The protein localises to the cell membrane. Its subcellular location is the endosome membrane. The protein resides in the cytoplasm. It is found in the cytoskeleton. It localises to the actin patch. Its function is as follows. Component of the PAN1 actin cytoskeleton-regulatory complex required for the internalization of endosomes during actin-coupled endocytosis. The complex links the site of endocytosis to the cell membrane-associated actin cytoskeleton. Mediates uptake of external molecules and vacuolar degradation of plasma membrane proteins. Plays a role in the proper organization of the cell membrane-associated actin cytoskeleton and promotes its destabilization. The chain is Actin cytoskeleton-regulatory complex protein pan1 (pan1) from Aspergillus clavatus (strain ATCC 1007 / CBS 513.65 / DSM 816 / NCTC 3887 / NRRL 1 / QM 1276 / 107).